The sequence spans 194 residues: ECF RNA polymerase sigma factor SigX (194 aa).

A Polymerase core binding motif is present at residues Asp32–Tyr45. The segment at residues Ile136–His155 is a DNA-binding region (H-T-H motif).

It belongs to the sigma-70 factor family. ECF subfamily. In terms of assembly, interacts transiently with the RNAP core.

The protein localises to the cell membrane. Sigma factors are initiation factors that promote the attachment of RNA polymerase (RNAP) to specific initiation sites and are then released. May be involved in the regulation of iron metabolism. Associates with RNAP core during early growth phases, association decreases as cells age. The chain is ECF RNA polymerase sigma factor SigX (sigX) from Bacillus subtilis (strain 168).